Reading from the N-terminus, the 194-residue chain is PRELI domain containing protein 3B (194 aa).

Positions 1 to 172 constitute a PRELI/MSF1 domain; the sequence is MKIWTSEHVF…VIHKLNAEIE (172 aa). Residues S46 and S51 each carry the phosphoserine modification.

It belongs to the slowmo family.

The protein is PRELI domain containing protein 3B (PRELID3B) of Bos taurus (Bovine).